Consider the following 375-residue polypeptide: MNYQMITTDDALASLCEAVRAFPAIALDTEFVRTRTYYPQLGLIQLFDGEHLALIDPLGITDWSPLKAILRDPSITKFLHAGSEDLEVFLNVFGELPQPLIDTQILAAFCGRPMSWGFASMVEEYSGVTLDKSESRTDWLARPLTERQCEYAAADVWYLLPITAKLMVETEASGWLPAALDECRLMQMRRQEVVAPEDAWRDITNAWQLRTRQLACLQLLADWRLRKARERDLAVNFVVREEHLWSVARYMPGSLGELDSLGLSGSEIRFHGKTLLALVEKAQTLPEDALPQPMLNLMDMPGYRKAFKAIKSLITDVSETHKISAELLASRRQINQLLNWHWKLKPQNNLPELISGWRGELMAEALHNLLQEYPQ.

Positions 3 to 169 (YQMITTDDAL…LPITAKLMVE (167 aa)) constitute a 3'-5' exonuclease domain. The HRDC domain maps to 210 to 289 (RTRQLACLQL…EKAQTLPEDA (80 aa)).

Belongs to the RNase D family. Requires a divalent metal cation as cofactor.

It localises to the cytoplasm. It carries out the reaction Exonucleolytic cleavage that removes extra residues from the 3'-terminus of tRNA to produce 5'-mononucleotides.. Its function is as follows. Exonuclease involved in the 3' processing of various precursor tRNAs. Initiates hydrolysis at the 3'-terminus of an RNA molecule and releases 5'-mononucleotides. The protein is Ribonuclease D of Escherichia coli (strain K12).